The primary structure comprises 604 residues: MMADSKLVSLNNNLSGKIKDQGKVIKNYYGTMDIKKINDGLLDSKILGAFNTVIALLGSIIIIVMNIMIIQNYTRTTDNQALIKESLQSVQQQIKALTDKIGTEIGPKVSLIDTSSTITIPANIGLLGSKISQSTSSINENVNDKCKFTLPPLKIHECNISCPNPLPFREYRPISQGVSDLVGLPNQICLQKTTSTILKPRLISYTLPINTREGVCITDPLLAVDNGFFAYSHLEKIGSCTRGIAKQRIIGVGEVLDRGDKVPSMFMTNVWTPPNPSTIHHCSSTYHEDFYYTLCAVSHVGDPILNSTSWTESLSLIRLAVRPKSDSGDYNQKYIAITKVERGKYDKVMPYGPSGIKQGDTLYFPAVGFLPRTEFQYNDSNCPIIHCKYSKAENCRLSMGVNSKSHYILRSGLLKYNLSLGGDIILQFIEIADNRLTIGSPSKIYNSLGQPVFYQASYSWDTMIKLGDVDTVDPLRVQWRNNSVISRPGQSQCPRFNVCPEVCWEGTYNDAFLIDRLNWVSAGVYLNSNQTAENPVFAVFKDNEILYQVPLAEDDTNAQKTITDCFLLENVIWCISLVEIYDTGDSVIRPKLFAVKIPAQCSES.

Residues 1 to 49 (MMADSKLVSLNNNLSGKIKDQGKVIKNYYGTMDIKKINDGLLDSKILGA) are Intravirion-facing. A helical transmembrane segment spans residues 50-70 (FNTVIALLGSIIIIVMNIMII). At 71-604 (QNYTRTTDNQ…VKIPAQCSES (534 aa)) the chain is on the virion surface side. 7 N-linked (GlcNAc...) asparagine; by host glycosylation sites follow: Asn-72, Asn-159, Asn-306, Asn-378, Asn-417, Asn-481, and Asn-529.

This sequence belongs to the paramyxoviruses hemagglutinin-neuraminidase family.

The protein localises to the virion membrane. It localises to the host cell membrane. Its function is as follows. Attaches the virus to sialic acid-containing cell receptors and thereby initiating infection. Binding of glycoprotein G to the receptor induces a conformational change that allows the F protein to trigger virion/cell membranes fusion. The sequence is that of Glycoprotein G (G) from Equus caballus (Horse).